Here is a 547-residue protein sequence, read N- to C-terminus: Phosphomethylpyrimidine synthase (547 aa).

Residues Asn-150, Met-179, Tyr-208, His-244, 264-266, 305-308, and Glu-344 each bind substrate; these read SRG and DGLR. His-348 provides a ligand contact to Zn(2+). Tyr-371 provides a ligand contact to substrate. His-412 is a Zn(2+) binding site. [4Fe-4S] cluster-binding residues include Cys-492, Cys-495, and Cys-500.

This sequence belongs to the ThiC family. [4Fe-4S] cluster serves as cofactor.

It carries out the reaction 5-amino-1-(5-phospho-beta-D-ribosyl)imidazole + S-adenosyl-L-methionine = 4-amino-2-methyl-5-(phosphooxymethyl)pyrimidine + CO + 5'-deoxyadenosine + formate + L-methionine + 3 H(+). It participates in cofactor biosynthesis; thiamine diphosphate biosynthesis. Catalyzes the synthesis of the hydroxymethylpyrimidine phosphate (HMP-P) moiety of thiamine from aminoimidazole ribotide (AIR) in a radical S-adenosyl-L-methionine (SAM)-dependent reaction. This chain is Phosphomethylpyrimidine synthase, found in Nocardia farcinica (strain IFM 10152).